Consider the following 273-residue polypeptide: 29 kDa ribonucleoprotein A, chloroplastic (273 aa).

Residues 1–58 (MASSASSLHFLSLTPQTLPLPKPTSQTTSLSFFSLPPSSLNLSLSSSSSCFSSRFVRK) constitute a chloroplast transit peptide. Residues 87 to 165 (LKIFVGNLPF…RALRVNSGPP (79 aa)) form the RRM 1 domain. Residues 156 to 181 (RALRVNSGPPPEKRENSSFRGGSRGG) are disordered. Residues 166-187 (PEKRENSSFRGGSRGGGSFDSS) form a linker (Gly-rich) region. One can recognise an RRM 2 domain in the interval 188 to 266 (NRVYVGNLAW…RAIRVSPAEA (79 aa)).

The protein resides in the plastid. It is found in the chloroplast. Functionally, could be involved in splicing and/or processing of chloroplast RNA's. This chain is 29 kDa ribonucleoprotein A, chloroplastic, found in Nicotiana sylvestris (Wood tobacco).